The sequence spans 131 residues: UPF0102 protein YraN (131 aa).

It belongs to the UPF0102 family.

The protein is UPF0102 protein YraN of Salmonella agona (strain SL483).